The sequence spans 310 residues: MVRLDAITLKQLRALVAVAGSASLTGGATRLGLTPPAIHSQIRNLEEAFGVPLLHRPPETGSFTPTLAGIAVLEAAQRIEVILSQCSYQVMAVSEGRAGQVTLGVVSTGRYFAPRLVKMLSLACPEIRIALRVGNREQLIDDLARHMVDLAVMGRPPRQPEVASVALGPHPHGIVAPPDHPLAGLAEVPVPDLLSQTFLARAEGSGTRVLMSRYLDRLGEGQVVDLIEMDSNETIKQSVIAGLGLAFLSLHVVMDELRFGQLVQLAAPGLPIERHWFLVHPVDRPLNPAALRVQGEIVKLKGAYLPGAPA.

The HTH lysR-type domain maps to 7 to 64; the sequence is ITLKQLRALVAVAGSASLTGGATRLGLTPPAIHSQIRNLEEAFGVPLLHRPPETGSFT. Residues 24 to 43 constitute a DNA-binding region (H-T-H motif); it reads LTGGATRLGLTPPAIHSQIR.

It belongs to the LysR transcriptional regulatory family.

In terms of biological role, transcriptional activator for the cbb operon for RuBisCO and other Calvin cycle genes. This chain is HTH-type transcriptional regulator CbbR (cbbR), found in Cereibacter sphaeroides (Rhodobacter sphaeroides).